A 443-amino-acid chain; its full sequence is Putative cytochrome bd menaquinol oxidase subunit I (443 aa).

The next 9 helical transmembrane spans lie at 19–39, 60–80, 93–113, 125–145, 176–196, 219–239, 322–342, 357–377, and 405–425; these read IIFATLGVGLPLMILVAELIY, VLLGVAIPTGTIAGTQLALLW, LPFQIEIYAFFVEALFMSIYV, IVAVFFVLVGAAASAVLITNV, FFITAGHVVLSAFMTGAFIVA, ALLLALTIGGIFSLLTALNGH, LFNAMVGVGMLLILYSIIGVV, LIIFMTAGPFSLIGIEFGWIF, and VLFLFFTFVYAVLGAAVVYVL. Residue H182 coordinates heme b.

This sequence belongs to the cytochrome ubiquinol oxidase subunit 1 family. Heme b serves as cofactor.

It is found in the cell membrane. In terms of biological role, may have a role in sporulation. Can compensate for the loss of cytochrome aa3. The protein is Putative cytochrome bd menaquinol oxidase subunit I (ythA) of Bacillus subtilis (strain 168).